Reading from the N-terminus, the 196-residue chain is Probable malonic semialdehyde reductase RutE (196 aa).

Belongs to the nitroreductase family. HadB/RutE subfamily. The cofactor is FMN.

It catalyses the reaction 3-hydroxypropanoate + NADP(+) = 3-oxopropanoate + NADPH + H(+). Functionally, may reduce toxic product malonic semialdehyde to 3-hydroxypropionic acid, which is excreted. This chain is Probable malonic semialdehyde reductase RutE, found in Escherichia coli O45:K1 (strain S88 / ExPEC).